Consider the following 654-residue polypeptide: Cysteine-rich receptor-like protein kinase 40 (654 aa).

Positions 1 to 27 are cleaved as a signal peptide; sequence MGKCSALMIFLSSSLLLVLQTLHVVNA. 2 Gnk2-homologous domains span residues 28-131 and 143-250; these read VKCF…NQST and WPSP…LYSF. Residues 28 to 287 are Extracellular-facing; that stretch reads VKCFGNSFNG…VKKGKSIGYG (260 aa). N38, N65, N128, N154, N167, and N256 each carry an N-linked (GlcNAc...) asparagine glycan. Residues 288 to 308 traverse the membrane as a helical segment; that stretch reads GIIAIVVVFTFINLLVFIGFI. The Cytoplasmic segment spans residues 309–654; that stretch reads KVYARRGKLN…DDVFTELSCR (346 aa). The Protein kinase domain occupies 348 to 619; sequence FSSENTLGQG…VIIWLGSETI (272 aa). Residues 354-362 and K376 each bind ATP; that span reads LGQGGFGTV. Phosphotyrosine is present on Y421. Catalysis depends on D473, which acts as the Proton acceptor. Residue S477 is modified to Phosphoserine. A Phosphothreonine modification is found at T513. Position 521 is a phosphotyrosine (Y521).

This sequence belongs to the protein kinase superfamily. Ser/Thr protein kinase family. CRK subfamily.

It localises to the membrane. It carries out the reaction L-seryl-[protein] + ATP = O-phospho-L-seryl-[protein] + ADP + H(+). It catalyses the reaction L-threonyl-[protein] + ATP = O-phospho-L-threonyl-[protein] + ADP + H(+). This chain is Cysteine-rich receptor-like protein kinase 40 (CRK40), found in Arabidopsis thaliana (Mouse-ear cress).